The chain runs to 431 residues: IMP-specific 5'-nucleotidase 1 (431 aa).

Residue Lys117 coordinates ATP. The active-site Nucleophile is the Asp157. IMP-binding residues include Asp157, Asp159, Asp165, Thr193, Asp349, and Lys357. The Mg(2+) site is built by Asp157 and Asp159. Asp159 (proton donor) is an active-site residue. Residue Asp388 coordinates Mg(2+).

The protein belongs to the ISN1 family. As to quaternary structure, homotetramer. Requires Mg(2+) as cofactor.

The enzyme catalyses IMP + H2O = inosine + phosphate. With respect to regulation, allosterically activated by ATP. ATP binding is a prerequisite to magnesium and substrate binding. ATP binds to 2 of the subunits in the homotetramer inducing a closure of these 2 subunits and the release of the C-terminal loop, thereby activating the enzyme. Its function is as follows. IMP-specific 5'-nucleotidase involved in IMP (inositol monophosphate) degradation. The chain is IMP-specific 5'-nucleotidase 1 (isn-1) from Neurospora crassa (strain ATCC 24698 / 74-OR23-1A / CBS 708.71 / DSM 1257 / FGSC 987).